A 103-amino-acid chain; its full sequence is Pyrimidine/purine nucleoside phosphorylase (103 aa).

The protein belongs to the nucleoside phosphorylase PpnP family.

The catalysed reaction is a purine D-ribonucleoside + phosphate = a purine nucleobase + alpha-D-ribose 1-phosphate. It catalyses the reaction adenosine + phosphate = alpha-D-ribose 1-phosphate + adenine. The enzyme catalyses cytidine + phosphate = cytosine + alpha-D-ribose 1-phosphate. It carries out the reaction guanosine + phosphate = alpha-D-ribose 1-phosphate + guanine. The catalysed reaction is inosine + phosphate = alpha-D-ribose 1-phosphate + hypoxanthine. It catalyses the reaction thymidine + phosphate = 2-deoxy-alpha-D-ribose 1-phosphate + thymine. The enzyme catalyses uridine + phosphate = alpha-D-ribose 1-phosphate + uracil. It carries out the reaction xanthosine + phosphate = alpha-D-ribose 1-phosphate + xanthine. In terms of biological role, catalyzes the phosphorolysis of diverse nucleosides, yielding D-ribose 1-phosphate and the respective free bases. Can use uridine, adenosine, guanosine, cytidine, thymidine, inosine and xanthosine as substrates. Also catalyzes the reverse reactions. In Methylobacillus flagellatus (strain ATCC 51484 / DSM 6875 / VKM B-1610 / KT), this protein is Pyrimidine/purine nucleoside phosphorylase.